The sequence spans 111 residues: Large ribosomal subunit protein uL22 (111 aa).

The protein belongs to the universal ribosomal protein uL22 family. As to quaternary structure, part of the 50S ribosomal subunit.

This protein binds specifically to 23S rRNA; its binding is stimulated by other ribosomal proteins, e.g. L4, L17, and L20. It is important during the early stages of 50S assembly. It makes multiple contacts with different domains of the 23S rRNA in the assembled 50S subunit and ribosome. Functionally, the globular domain of the protein is located near the polypeptide exit tunnel on the outside of the subunit, while an extended beta-hairpin is found that lines the wall of the exit tunnel in the center of the 70S ribosome. The chain is Large ribosomal subunit protein uL22 from Stenotrophomonas maltophilia (strain R551-3).